We begin with the raw amino-acid sequence, 798 residues long: Penicillin-binding protein 1A (798 aa).

Over 1-9 (MIKKIMTTC) the chain is Cytoplasmic. Residues 10–30 (FGLVFGLCVFAVGLLAIAILA) form a helical; Signal-anchor for type II membrane protein membrane-spanning segment. Residues 31–798 (TYPKLPSLDS…SKRQQLDSLF (768 aa)) are Periplasmic-facing. The interval 50 to 218 (LTVYSADGKI…SAYNPIVNPE (169 aa)) is transglycosylase. Residue Glu-88 is the Proton donor; for transglycosylase activity of the active site. The tract at residues 378–700 (RRALGFAARA…GTIAVPVWVD (323 aa)) is transpeptidase. Ser-461 functions as the Acyl-ester intermediate; for transpeptidase activity in the catalytic mechanism. A disordered region spans residues 739-798 (LMLDNGGAAPQPSRRVKEDDGGAAEGGRQEADDESRQDMQETPVLPSNTDSKRQQLDSLF). Composition is skewed to basic and acidic residues over residues 765–777 (GRQE…RQDM) and 788–798 (DSKRQQLDSLF).

It in the N-terminal section; belongs to the glycosyltransferase 51 family. The protein in the C-terminal section; belongs to the transpeptidase family.

Its subcellular location is the cell inner membrane. The enzyme catalyses [GlcNAc-(1-&gt;4)-Mur2Ac(oyl-L-Ala-gamma-D-Glu-L-Lys-D-Ala-D-Ala)](n)-di-trans,octa-cis-undecaprenyl diphosphate + beta-D-GlcNAc-(1-&gt;4)-Mur2Ac(oyl-L-Ala-gamma-D-Glu-L-Lys-D-Ala-D-Ala)-di-trans,octa-cis-undecaprenyl diphosphate = [GlcNAc-(1-&gt;4)-Mur2Ac(oyl-L-Ala-gamma-D-Glu-L-Lys-D-Ala-D-Ala)](n+1)-di-trans,octa-cis-undecaprenyl diphosphate + di-trans,octa-cis-undecaprenyl diphosphate + H(+). It carries out the reaction Preferential cleavage: (Ac)2-L-Lys-D-Ala-|-D-Ala. Also transpeptidation of peptidyl-alanyl moieties that are N-acyl substituents of D-alanine.. The protein operates within cell wall biogenesis; peptidoglycan biosynthesis. In terms of biological role, cell wall formation. Synthesis of cross-linked peptidoglycan from the lipid intermediates. The enzyme has a penicillin-insensitive transglycosylase N-terminal domain (formation of linear glycan strands) and a penicillin-sensitive transpeptidase C-terminal domain (cross-linking of the peptide subunits). In Neisseria lactamica, this protein is Penicillin-binding protein 1A (mrcA).